Here is a 360-residue protein sequence, read N- to C-terminus: Heat-inducible transcription repressor HrcA (360 aa).

Belongs to the HrcA family.

Its function is as follows. Negative regulator of class I heat shock genes (grpE-dnaK-dnaJ and groELS operons). Prevents heat-shock induction of these operons. This Mesorhizobium japonicum (strain LMG 29417 / CECT 9101 / MAFF 303099) (Mesorhizobium loti (strain MAFF 303099)) protein is Heat-inducible transcription repressor HrcA.